The sequence spans 140 residues: Hemoglobin subunit beta (140 aa).

The 140-residue stretch at 1–140 (GGSDVSAFLA…VGEALAKGYH (140 aa)) folds into the Globin domain. Heme b-binding residues include His-57 and His-86.

It belongs to the globin family. As to quaternary structure, heterotetramer of either two alpha-B chains or two alpha-C chains and two beta chains.

The beta chain is a component of adult hemoglobins B. And C. This chain is Hemoglobin subunit beta (HBB), found in Aquarana catesbeiana (American bullfrog).